A 534-amino-acid polypeptide reads, in one-letter code: Cytochrome P450 monooxygenase vrtK (534 aa).

Cys448 is a heme binding site.

The protein belongs to the cytochrome P450 family. Requires heme as cofactor.

It participates in secondary metabolite biosynthesis; terpenoid biosynthesis. Its function is as follows. Cytochrome P450 monooxygenase; part of the gene cluster that mediates the biosynthesis of viridicatumtoxin, a tetracycline-like fungal meroterpenoid with a unique, fused spirobicyclic ring system. The first step of the pathway is the production of the malonamoyl-CoA starter unit for the polyketide synthase vrtA. The aldolase vrtJ may be involved in the synthesis of the malonamate substrate for malonamoyl-CoA synthetase vrtB. The polyketide synthase vrtA then may utilize the malonamoyl-CoA starter unit, followed by sequential condensation of eight malonyl-CoA units to form the polyketide backbone. The cyclization of the last ring could be mediated by the lactamase-like protein vrtG. The proposed post-PKS tailoring steps are a hydroxylation at C5 catalyzed the cytochrome P450 monooxygenase vrtE, a hydroxylation at C12a catalyzed by VrtH and/or VrtI, and an O-methylation by the O-methyltransferase vrtF. VrtC is then proposed to catalyze the transfer of a geranyl group synthesized by vrtD to the aromatic C ring of the tetracyclic polyketide intermediate of viridicatumtoxin to yield previridicatumtoxin. Finally, the cytochrome P450 monooxygenase vrtK catalyzes the spirocyclization of the geranyl moiety of previridicatumtoxin to afford viridicatumtoxin. The polypeptide is Cytochrome P450 monooxygenase vrtK (Penicillium aethiopicum).